We begin with the raw amino-acid sequence, 2238 residues long: Protein Ycf2 (2238 aa).

ATP is bound at residue 1579–1586; the sequence is GSIGTGRS.

This sequence belongs to the Ycf2 family.

The protein resides in the plastid. Functionally, probable ATPase of unknown function. Its presence in a non-photosynthetic plant (Epifagus virginiana) and experiments in tobacco indicate that it has an essential function which is probably not related to photosynthesis. The chain is Protein Ycf2 from Cuscuta exaltata (Tall dodder).